The primary structure comprises 913 residues: Valine--tRNA ligase (913 aa).

A 'HIGH' region motif is present at residues 48-58 (PNVTGSLHMGH). A 'KMSKS' region motif is present at residues 541-545 (KMSKS). Lys-544 contributes to the ATP binding site. The stretch at 839–907 (VVDLEALVSK…IEHRLQSLGV (69 aa)) forms a coiled coil.

This sequence belongs to the class-I aminoacyl-tRNA synthetase family. ValS type 1 subfamily. As to quaternary structure, monomer.

The protein localises to the cytoplasm. It catalyses the reaction tRNA(Val) + L-valine + ATP = L-valyl-tRNA(Val) + AMP + diphosphate. Its function is as follows. Catalyzes the attachment of valine to tRNA(Val). As ValRS can inadvertently accommodate and process structurally similar amino acids such as threonine, to avoid such errors, it has a 'posttransfer' editing activity that hydrolyzes mischarged Thr-tRNA(Val) in a tRNA-dependent manner. The sequence is that of Valine--tRNA ligase from Thermosynechococcus vestitus (strain NIES-2133 / IAM M-273 / BP-1).